A 100-amino-acid polypeptide reads, in one-letter code: uncharacterized protein (100 aa).

Residues 40 to 100 (GDQMARKATS…DPTKNKSGRG (61 aa)) form a disordered region.

This is an uncharacterized protein from Mycobacterium tuberculosis (strain ATCC 25618 / H37Rv).